We begin with the raw amino-acid sequence, 397 residues long: MIKPVGSDELRPRFVYDPEQHHRLSSEAESLPSVIVSSQAAGNAVMLGAGYFSPLDGFMNLADALSSAQSMTLTDGRFFPVPLLCLLESADAIAGATRIALRDPNVEGNPVLAVMDVTAVEQVSDAQMALMTEQVYGTSDPKHPGVETFNSQGRTAISGPIQVLNFSYFQTDFPDTFRTAVEIRHEIQERGWQKIVAFQTRNPMHRAHEELCKMAMEAVEADGVVIHMLLGQLKPGDIPAPVRDAAIRTMAELYFPPNTVMVTGYGFDMLYAGPREAVLHAYFRQNMGATHFIIGRDHAGVGDYYGPFDAQTIFDDAVPTDVLAIEIFRADNTAYSKKLGRVVMMRDAPDHTPDDFIQLSGTRVREMLGQGEAPPPEFSRPEVAQILMDYYRSLPQS.

It belongs to the sulfate adenylyltransferase family.

The catalysed reaction is sulfate + ATP + H(+) = adenosine 5'-phosphosulfate + diphosphate. It participates in sulfur metabolism; hydrogen sulfide biosynthesis; sulfite from sulfate: step 1/3. The sequence is that of Sulfate adenylyltransferase (sat) from Allochromatium vinosum (strain ATCC 17899 / DSM 180 / NBRC 103801 / NCIMB 10441 / D) (Chromatium vinosum).